Here is a 63-residue protein sequence, read N- to C-terminus: MQDMRDQNPPQGYPAAEQVSEQPGQDKKKKKPRFFETKQKGDRGFIEGCLFALCCCWICEMCF.

The interval 1 to 34 (MQDMRDQNPPQGYPAAEQVSEQPGQDKKKKKPRF) is disordered. A helical membrane pass occupies residues 40–56 (KGDRGFIEGCLFALCCC).

It belongs to the CYSTM1 family. Homodimer and heterodimers. Binds weakly to CYSTM4, CYSTM6 and CYSTM7. As to expression, mostly expressed in roots, flowers and siliques and, to a lower extent, in stems and leaves.

The protein resides in the cell membrane. It is found in the cytoplasm. Its function is as follows. Involved in resistance to abiotic stress. The chain is Protein CYSTEINE-RICH TRANSMEMBRANE MODULE 12 from Arabidopsis thaliana (Mouse-ear cress).